Here is a 171-residue protein sequence, read N- to C-terminus: uncharacterized protein (171 aa).

The helical transmembrane segment at 21–43 (GVAASLLILLAVYTIFQSTVVIA) threads the bilayer.

It localises to the membrane. This is an uncharacterized protein from Archaeoglobus fulgidus (strain ATCC 49558 / DSM 4304 / JCM 9628 / NBRC 100126 / VC-16).